The following is a 397-amino-acid chain: MSLRSCSTEMIPEFTVTEITDLVRQVMHDTFYCIKIRGEISGLSRPSSGHVYLSLKDDNSVISAVCWNGTRLDVQFENGLEVICTGHLSTYQSRYQLVIEGMVLAGQGKLAAMLEERRKKLEKEGLFDQARKKPLPLLPLKIGVITSPTGAVIRDILNRVKHRFPSHIIVWPVQVQGSQASAMVVQAILGFNNLEEPPDVIIVARGGGSIEDLWPFNDEELARTTAASKIPIVSAIGHETDFTIIDYAADVRAPTPTAAVEIVLPERQQLVSDIAHKLSKIRSAVRNVLGAKEHRLLQLYGVLTETKHKISEVGRSALAHQEKIEFLFKVALLKKQQYLDNLIGRIDRYNKEHIISVGYAVIYDNTGQHVSSANAVAPDDTIVIEWKDGKRRAAILT.

Belongs to the XseA family. Heterooligomer composed of large and small subunits.

Its subcellular location is the cytoplasm. It catalyses the reaction Exonucleolytic cleavage in either 5'- to 3'- or 3'- to 5'-direction to yield nucleoside 5'-phosphates.. Bidirectionally degrades single-stranded DNA into large acid-insoluble oligonucleotides, which are then degraded further into small acid-soluble oligonucleotides. This Anaplasma marginale (strain St. Maries) protein is Exodeoxyribonuclease 7 large subunit.